Reading from the N-terminus, the 363-residue chain is 3-isopropylmalate dehydrogenase (363 aa).

78–91 (GPKWEHLPPDQQPE) contacts NAD(+). Residues Arg99, Arg109, Arg138, and Asp227 each coordinate substrate. The Mg(2+) site is built by Asp227, Asp251, and Asp255. 285-297 (GSAPDITGKNIAN) is an NAD(+) binding site.

This sequence belongs to the isocitrate and isopropylmalate dehydrogenases family. LeuB type 1 subfamily. As to quaternary structure, homodimer. Mg(2+) is required as a cofactor. Mn(2+) serves as cofactor.

It is found in the cytoplasm. It carries out the reaction (2R,3S)-3-isopropylmalate + NAD(+) = 4-methyl-2-oxopentanoate + CO2 + NADH. It functions in the pathway amino-acid biosynthesis; L-leucine biosynthesis; L-leucine from 3-methyl-2-oxobutanoate: step 3/4. Functionally, catalyzes the oxidation of 3-carboxy-2-hydroxy-4-methylpentanoate (3-isopropylmalate) to 3-carboxy-4-methyl-2-oxopentanoate. The product decarboxylates to 4-methyl-2 oxopentanoate. This chain is 3-isopropylmalate dehydrogenase, found in Shigella boydii serotype 4 (strain Sb227).